Here is a 351-residue protein sequence, read N- to C-terminus: Peptide chain release factor 1 (351 aa).

Gln229 carries the N5-methylglutamine modification.

This sequence belongs to the prokaryotic/mitochondrial release factor family. Methylated by PrmC. Methylation increases the termination efficiency of RF1.

The protein resides in the cytoplasm. Peptide chain release factor 1 directs the termination of translation in response to the peptide chain termination codons UAG and UAA. The chain is Peptide chain release factor 1 from Cereibacter sphaeroides (strain ATCC 17029 / ATH 2.4.9) (Rhodobacter sphaeroides).